Consider the following 394-residue polypeptide: Dimethyladenosine transferase 2, mitochondrial (394 aa).

The N-terminal 19 residues, M1–R19, are a transit peptide targeting the mitochondrion. S-adenosyl-L-methionine-binding residues include V75, E123, and D149. The DNA-binding stretch occupies residues K326–R327.

Belongs to the class I-like SAM-binding methyltransferase superfamily. rRNA adenine N(6)-methyltransferase family. KsgA subfamily. In terms of assembly, homodimer. Component of the mitochondrial transcription initiation complex, composed at least of TFB2M, TFAM and POLRMT. In this complex TFAM recruits POLRMT to the promoter whereas TFB2M induces structural changes in POLRMT to enable promoter opening and trapping of the DNA non-template strand. Interacts with mitochondrial RNA polymerase POLRMT. Interacts with TFAM.

The protein resides in the mitochondrion. The enzyme catalyses adenosine in rRNA + S-adenosyl-L-methionine = N(6)-methyladenosine in rRNA + S-adenosyl-L-homocysteine + H(+). Its function is as follows. S-adenosyl-L-methionine-dependent rRNA methyltransferase which may methylate two specific adjacent adenosines in the loop of a conserved hairpin near the 3'-end of 12S mitochondrial rRNA. Component of the mitochondrial transcription initiation complex, composed at least of TFB2M, TFAM and POLRMT that is required for basal transcription of mitochondrial DNA. In this complex TFAM recruits POLRMT to a specific promoter whereas TFB2M induces structural changes in POLRMT to enable promoter opening and trapping of the DNA non-template strand. Stimulates transcription independently of the methyltransferase activity. The sequence is that of Dimethyladenosine transferase 2, mitochondrial from Bos taurus (Bovine).